A 177-amino-acid chain; its full sequence is Nucleoside-triphosphatase THEP1 (177 aa).

ATP-binding positions include 10-17 and 101-108; these read GKPGIGKT and CLVIDEIG.

Belongs to the THEP1 NTPase family.

It carries out the reaction a ribonucleoside 5'-triphosphate + H2O = a ribonucleoside 5'-diphosphate + phosphate + H(+). Has nucleotide phosphatase activity towards ATP, GTP, CTP, TTP and UTP. May hydrolyze nucleoside diphosphates with lower efficiency. The protein is Nucleoside-triphosphatase THEP1 of Natranaerobius thermophilus (strain ATCC BAA-1301 / DSM 18059 / JW/NM-WN-LF).